The chain runs to 225 residues: UPF0758 protein BP1235 (225 aa).

Residues 103–225 (ALANPDLVRR…TVSMAAQGHL (123 aa)) enclose the MPN domain. 3 residues coordinate Zn(2+): histidine 174, histidine 176, and aspartate 187. A JAMM motif motif is present at residues 174–187 (HNHPGGTAAASAAD).

Belongs to the UPF0758 family.

The protein is UPF0758 protein BP1235 of Bordetella pertussis (strain Tohama I / ATCC BAA-589 / NCTC 13251).